Reading from the N-terminus, the 520-residue chain is Erythritol kinase (520 aa).

The protein belongs to the FGGY kinase family.

It catalyses the reaction erythritol + ATP = D-erythritol 1-phosphate + ADP + H(+). Its pathway is carbohydrate metabolism; erythritol degradation. Catalyzes the phosphorylation of erythritol to D-erythritol-1-phosphate. The protein is Erythritol kinase of Brucella abortus (strain 2308).